Reading from the N-terminus, the 220-residue chain is 7-cyano-7-deazaguanine synthase (220 aa).

11 to 21 (VSGGMDSVTLM) is a binding site for ATP. 4 residues coordinate Zn(2+): Cys186, Cys194, Cys197, and Cys200.

The protein belongs to the QueC family. Zn(2+) is required as a cofactor.

The catalysed reaction is 7-carboxy-7-deazaguanine + NH4(+) + ATP = 7-cyano-7-deazaguanine + ADP + phosphate + H2O + H(+). Its pathway is purine metabolism; 7-cyano-7-deazaguanine biosynthesis. Its function is as follows. Catalyzes the ATP-dependent conversion of 7-carboxy-7-deazaguanine (CDG) to 7-cyano-7-deazaguanine (preQ(0)). The protein is 7-cyano-7-deazaguanine synthase of Porphyromonas gingivalis (strain ATCC BAA-308 / W83).